Reading from the N-terminus, the 391-residue chain is Thioredoxin-interacting protein (391 aa).

Residue Lys-212 forms a Glycyl lysine isopeptide (Lys-Gly) (interchain with G-Cter in ubiquitin) linkage. Ser-361 is modified (phosphoserine).

The protein belongs to the arrestin family. Homodimer; disulfide-linked. Interacts with TXN/thioredoxin through its redox-active site. Interacts with transcriptional repressors ZBTB16, ZBTB32 and HDAC1. Interacts with DDIT4. Ubiquitinated; undergoes heterotypic 'Lys-48'-/'Lys-63'-branched polyubiquitination catalyzed by ITCH and UBR5 resulting in proteasomal degradation. Deubiquitinated by USP5, leading to TXNIP stabilization.

The protein resides in the cytoplasm. Its function is as follows. May act as an oxidative stress mediator by inhibiting thioredoxin activity or by limiting its bioavailability. Interacts with COPS5 and restores COPS5-induced suppression of CDKN1B stability, blocking the COPS5-mediated translocation of CDKN1B from the nucleus to the cytoplasm. Functions as a transcriptional repressor, possibly by acting as a bridge molecule between transcription factors and corepressor complexes, and over-expression will induce G0/G1 cell cycle arrest. Required for the maturation of natural killer cells. Acts as a suppressor of tumor cell growth. Inhibits the proteasomal degradation of DDIT4, and thereby contributes to the inhibition of the mammalian target of rapamycin complex 1 (mTORC1). This Sus scrofa (Pig) protein is Thioredoxin-interacting protein (TXNIP).